A 314-amino-acid chain; its full sequence is MEIPVIEPLFTKVTEDIPGAEGPVFDKNGDFYIVAPEVEVNGKPAGEILRIDLKTGKKTVICKPEVNGYGGIPAGCQCDRDANQLFVADMRLGLLVVQTDGTFEEIAKKDSEGRRMQGCNDCAFDYEGNLWITAPAGEVAPADYTRSMQEKFGSIYCFTTDGQMIQVDTAFQFPNGIAVRHMNDGRPYQLIVAETPTKKLWSYDIKGPAKIENKKVWGHIPGTHEGGADGMDFDEDNNLLVANWGSSHIEVFGPDGGQPKMRIRCPFEKPSNLHFKPQTKTIFVTEHENNAVWKFEWQRNGKKQYCETLKFGIF.

7 residues coordinate Ca(2+): glutamate 21, asparagine 120, asparagine 175, aspartate 229, aspartate 232, leucine 273, and histidine 274. Histidine 287 acts as the Proton acceptor in catalysis.

In terms of assembly, monomer. Requires Ca(2+) as cofactor.

The enzyme catalyses diisopropyl fluorophosphate + H2O = diisopropyl phosphate + fluoride + 2 H(+). Its activity is regulated as follows. Inhibited by chelating agents. Functionally, biological function and substrate unknown. However, it is capable of acting on phosphorus anhydride bonds (such as phosphorus-halide and phosphorus-cyanide) in organophosphorus compounds (including nerve gases). In Loligo vulgaris (Common European squid), this protein is Diisopropyl-fluorophosphatase.